The following is a 277-amino-acid chain: Large ribosomal subunit protein uL2 (277 aa).

The tract at residues 219–277 (RPQTRGSAMNPVDHPHGGGEGKKNSGRHPVTPWGKPTKGAKTRRKKASDKLIISRRKGK) is disordered. The segment covering 231 to 241 (DHPHGGGEGKK) has biased composition (basic and acidic residues). Basic residues predominate over residues 256 to 277 (KGAKTRRKKASDKLIISRRKGK).

This sequence belongs to the universal ribosomal protein uL2 family. In terms of assembly, part of the 50S ribosomal subunit. Forms a bridge to the 30S subunit in the 70S ribosome.

One of the primary rRNA binding proteins. Required for association of the 30S and 50S subunits to form the 70S ribosome, for tRNA binding and peptide bond formation. It has been suggested to have peptidyltransferase activity; this is somewhat controversial. Makes several contacts with the 16S rRNA in the 70S ribosome. The protein is Large ribosomal subunit protein uL2 of Campylobacter concisus (strain 13826).